We begin with the raw amino-acid sequence, 151 residues long: Large ribosomal subunit protein bL9 (151 aa).

This sequence belongs to the bacterial ribosomal protein bL9 family.

Binds to the 23S rRNA. In Prochlorococcus marinus (strain AS9601), this protein is Large ribosomal subunit protein bL9.